A 245-amino-acid polypeptide reads, in one-letter code: DNA repair protein RecO (245 aa).

This sequence belongs to the RecO family.

In terms of biological role, involved in DNA repair and RecF pathway recombination. The chain is DNA repair protein RecO from Erwinia tasmaniensis (strain DSM 17950 / CFBP 7177 / CIP 109463 / NCPPB 4357 / Et1/99).